Consider the following 581-residue polypeptide: Amino-acid acetyltransferase, mitochondrial (581 aa).

Positions 401-558 (FTLHNLIEDE…RIVGSEAVNI (158 aa)) constitute an N-acetyltransferase domain.

This sequence belongs to the acetyltransferase family.

It is found in the mitochondrion. The enzyme catalyses L-glutamate + acetyl-CoA = N-acetyl-L-glutamate + CoA + H(+). Its pathway is amino-acid biosynthesis; L-arginine biosynthesis; N(2)-acetyl-L-ornithine from L-glutamate: step 1/4. In terms of biological role, N-acetylglutamate synthase involved in arginine biosynthesis. The polypeptide is Amino-acid acetyltransferase, mitochondrial (ARG2) (Scheffersomyces stipitis (strain ATCC 58785 / CBS 6054 / NBRC 10063 / NRRL Y-11545) (Yeast)).